The chain runs to 283 residues: Protein FAM170B (283 aa).

The segment covering Met1–Glu11 has biased composition (basic and acidic residues). Disordered stretches follow at residues Met1–Gly58 and Ala246–Gln283.

The protein belongs to the FAM170 family. In terms of assembly, interacts with GOPC. As to expression, exclusively expressed in adult testis.

It is found in the cytoplasmic vesicle. Its subcellular location is the secretory vesicle. The protein resides in the acrosome. The protein localises to the acrosome outer membrane. In terms of biological role, plays a role in fertilization through the acrosome reaction. The chain is Protein FAM170B from Homo sapiens (Human).